The primary structure comprises 479 residues: Bifunctional protein HldE (479 aa).

The ribokinase stretch occupies residues 1 to 322; sequence MLAETQLAPI…AALERTAAQI (322 aa). 198–201 contacts ATP; it reads NRRE. Asp-267 is an active-site residue. The cytidylyltransferase stretch occupies residues 350–479; sequence FTNGCFDLVH…TSSLVAKART (130 aa).

The protein in the N-terminal section; belongs to the carbohydrate kinase PfkB family. It in the C-terminal section; belongs to the cytidylyltransferase family. As to quaternary structure, homodimer.

The catalysed reaction is D-glycero-beta-D-manno-heptose 7-phosphate + ATP = D-glycero-beta-D-manno-heptose 1,7-bisphosphate + ADP + H(+). It carries out the reaction D-glycero-beta-D-manno-heptose 1-phosphate + ATP + H(+) = ADP-D-glycero-beta-D-manno-heptose + diphosphate. Its pathway is nucleotide-sugar biosynthesis; ADP-L-glycero-beta-D-manno-heptose biosynthesis; ADP-L-glycero-beta-D-manno-heptose from D-glycero-beta-D-manno-heptose 7-phosphate: step 1/4. It functions in the pathway nucleotide-sugar biosynthesis; ADP-L-glycero-beta-D-manno-heptose biosynthesis; ADP-L-glycero-beta-D-manno-heptose from D-glycero-beta-D-manno-heptose 7-phosphate: step 3/4. Functionally, catalyzes the phosphorylation of D-glycero-D-manno-heptose 7-phosphate at the C-1 position to selectively form D-glycero-beta-D-manno-heptose-1,7-bisphosphate. Its function is as follows. Catalyzes the ADP transfer from ATP to D-glycero-beta-D-manno-heptose 1-phosphate, yielding ADP-D-glycero-beta-D-manno-heptose. The sequence is that of Bifunctional protein HldE from Azorhizobium caulinodans (strain ATCC 43989 / DSM 5975 / JCM 20966 / LMG 6465 / NBRC 14845 / NCIMB 13405 / ORS 571).